A 254-amino-acid polypeptide reads, in one-letter code: Phosphoribosylaminoimidazole-succinocarboxamide synthase (254 aa).

The protein belongs to the SAICAR synthetase family.

The enzyme catalyses 5-amino-1-(5-phospho-D-ribosyl)imidazole-4-carboxylate + L-aspartate + ATP = (2S)-2-[5-amino-1-(5-phospho-beta-D-ribosyl)imidazole-4-carboxamido]succinate + ADP + phosphate + 2 H(+). The protein operates within purine metabolism; IMP biosynthesis via de novo pathway; 5-amino-1-(5-phospho-D-ribosyl)imidazole-4-carboxamide from 5-amino-1-(5-phospho-D-ribosyl)imidazole-4-carboxylate: step 1/2. This is Phosphoribosylaminoimidazole-succinocarboxamide synthase from Brucella canis (strain ATCC 23365 / NCTC 10854 / RM-666).